A 277-amino-acid chain; its full sequence is Large ribosomal subunit protein uL2 (277 aa).

A disordered region spans residues 223–264; the sequence is VAMNPVDHPHGGGEGKTAAGRHPVSPWGTPSKGSRTRRNKRT.

Belongs to the universal ribosomal protein uL2 family. As to quaternary structure, part of the 50S ribosomal subunit. Forms a bridge to the 30S subunit in the 70S ribosome.

One of the primary rRNA binding proteins. Required for association of the 30S and 50S subunits to form the 70S ribosome, for tRNA binding and peptide bond formation. It has been suggested to have peptidyltransferase activity; this is somewhat controversial. Makes several contacts with the 16S rRNA in the 70S ribosome. In Nitrosomonas eutropha (strain DSM 101675 / C91 / Nm57), this protein is Large ribosomal subunit protein uL2.